Reading from the N-terminus, the 734-residue chain is Alpha-catulin (734 aa).

2 positions are modified to phosphoserine: S374 and S538.

Belongs to the vinculin/alpha-catenin family. In terms of assembly, interacts with ARHGEF1. Interacts with DTNA. The interaction is required for correct localization of both CTNL1 and DTNA. In terms of tissue distribution, widely expressed. Expressed at lower level in neural tissues and at the highest level in the adrenal gland.

Its subcellular location is the cytoplasm. The protein resides in the cytoskeleton. It is found in the cell membrane. May modulate the Rho pathway signaling by providing a scaffold for the Lbc Rho guanine nucleotide exchange factor (ARHGEF1). This chain is Alpha-catulin (CTNNAL1), found in Homo sapiens (Human).